We begin with the raw amino-acid sequence, 217 residues long: Resolvase homolog YneB (217 aa).

One can recognise a Resolvase/invertase-type recombinase catalytic domain in the interval 2–147; the sequence is KALIYARVST…RGMKRAVKNG (146 aa). The active-site O-(5'-phospho-DNA)-serine intermediate is Ser10.

It belongs to the site-specific recombinase resolvase family.

This chain is Resolvase homolog YneB (yneB), found in Bacillus subtilis (strain 168).